A 236-amino-acid chain; its full sequence is uncharacterized protein (236 aa).

Residues 7 to 74 (RTNRRDIYLK…PKIGSFVSRV (68 aa)) form the HTH gntR-type domain. The H-T-H motif DNA-binding region spans 34–53 (ENELAASMGVSRTPVRESLI).

This is an uncharacterized protein from Streptomyces ambofaciens.